The primary structure comprises 76 residues: Rhesus theta defensin-1/2 subunit B (76 aa).

The first 22 residues, 1–22 (MRTFALLTAMLLLVALHAQAEA), serve as a signal peptide directing secretion. A propeptide spanning residues 23-64 (RQARADEAAAQQQPGADDQGMAHSFTRPENAALPLSESARGL) is cleaved from the precursor. Residues 25–54 (ARADEAAAQQQPGADDQGMAHSFTRPENAA) are disordered. A compositionally biased stretch (low complexity) spans 30 to 44 (AAAQQQPGADDQGMA). R65 is covalently cross-linked (Cyclopeptide (Arg-Cys) (interchain with C-73 in subunit A); in form RTD-1). R65 is covalently cross-linked (Cyclopeptide (Arg-Cys) (interchain with C-73 in subunit B); in form RTD-2). The cysteines at positions 68 and 73 are disulfide-linked. C73 participates in a covalent cross-link: Cyclopeptide (Cys-Arg) (interchain with R-65 in subunit A); in form RTD-1. C73 is covalently cross-linked (Cyclopeptide (Cys-Arg) (interchain with R-65 in subunit B); in form RTD-2). A propeptide spanning residues 74-76 (QLL) is cleaved from the precursor.

The protein belongs to the alpha-defensin family. Theta subfamily. RTD-1 is a cyclic heterodimer composed of subunits A and B; disulfide-linked. RTD-2 is a cyclic homodimer composed of two subunits B; disulfide-linked. Forms a cyclic peptide with 1 subunit B (RTD-2) or with 1 subunit A (RTD-1). An additional intersubunit disulfide bond is formed. As to expression, RTD-1 is expressed in bone marrow. Detected in promyelocytes, myelocytes and mature neutrophils and monocytes.

Functionally, RTD-1 and RTD-2 have similar antimicrobial activities against the Gram-positive bacteria S.aureus 502A and L.monocytogenes, the Gram-negative bacterium S.typhimurium, and the fungi C.albicans 16820 and C.neoformans 271A. RTD-2 is 2-3-fold less active than RTD-1 against E.coli ML35. The sequence is that of Rhesus theta defensin-1/2 subunit B (RTD1B) from Macaca mulatta (Rhesus macaque).